The sequence spans 1104 residues: Transient receptor potential cation channel subfamily M member 8 (1104 aa).

Residues 1-22 are disordered; sequence MSFEGARLSMRSRRNGTMGSTR. Residues 1–733 are Cytoplasmic-facing; it reads MSFEGARLSM…LWYYVAFFTS (733 aa). Residues 734–758 traverse the membrane as a helical segment; that stretch reads PFVVFSWNVVFYIAFLLLFAYVLLM. The Extracellular segment spans residues 759 to 765; the sequence is DFHSVPH. The chain crosses the membrane as a helical span at residues 766-789; sequence TPELILYALVFVLFCDEVRQWYMN. Glu-782 and Gln-785 together coordinate Ca(2+). Topologically, residues 790 to 796 are cytoplasmic; it reads GVNYFTD. The chain crosses the membrane as a helical span at residues 797–817; that stretch reads LWNVMDTLGLFYFIAGIVFRL. 2 residues coordinate Ca(2+): Asn-799 and Asp-802. The Extracellular portion of the chain corresponds to 818–822; the sequence is HSSNK. A helical membrane pass occupies residues 823–848; the sequence is SSLYSGRVIFCLDYIIFTLRLIHIFT. At 849–853 the chain is on the cytoplasmic side; the sequence is VSRNL. Residues 854–890 form a helical membrane-spanning segment; that stretch reads GPKIIMLQRMLIDVFFFLFLFAVWMVAFGVARQGILR. At 891–895 the chain is on the extracellular side; that stretch reads QNEQR. Residues 896–912 constitute an intramembrane region (pore-forming); it reads WRWIFRSVIYEPYLAMF. The Extracellular segment spans residues 913 to 953; that stretch reads GQVPSDVDSTTYDFSHCTFSGNESKPLCVELDEHNLPRFPE. Asn-934 carries N-linked (GlcNAc...) (complex) asparagine glycosylation. The chain crosses the membrane as a helical span at residues 954 to 984; the sequence is WITIPLVCIYMLSTNILLVNLLVAMFGYTVG. Residues 985–1104 are Cytoplasmic-facing; it reads IVQENNDQVW…LLKEIANNIK (120 aa). Residues 1069–1104 adopt a coiled-coil conformation; sequence TKANDNSEEMRHRFRQLDSKLNDLKSLLKEIANNIK.

Belongs to the transient receptor (TC 1.A.4) family. LTrpC subfamily. TRPM8 sub-subfamily. Homotetramer. Interacts (via N-terminus and C-terminus domains) with TCAF1; the interaction stimulates TRPM8 channel activity. Interacts (via N-terminus and C-terminus domains) with TCAF2; the interaction inhibits TRPM8 channel activity. N-glycosylation is not essential for but facilitates cell surface expression, multimerization, association with lipid rafts and ion channel activity. As to expression, expressed in dorsal root and trigeminal ganglia. Specifically expressed in a subset of pain- and temperature-sensing neurons. Not expressed in heavily myelinated neurons. Not expressed in neurons expressing TRPA1 or TRPV1.

It localises to the cell membrane. It is found in the membrane raft. It carries out the reaction Ca(2+)(in) = Ca(2+)(out). The catalysed reaction is Na(+)(in) = Na(+)(out). The enzyme catalyses K(+)(in) = K(+)(out). With respect to regulation, activated by cold temperatures and by both natural and synthetic cooling compounds such as menthol and icilin. Activation of the channel requires the presence of PI(4,5)P2; PI(4,5)P2 is necessary to gate the channel. Activated by intracellular Ca(2+). In terms of biological role, non-selective ion channel permeable to monovalent and divalent cations, including Na(+), K(+), and Ca(2+), with higher permeability for Ca(2+). Activated by multiple factors, such as temperature, voltage, pressure, and changes in osmolality. Activated by cool temperatures (&lt;23-28 degrees Celsius) and by chemical ligands evoking a sensation of coolness, such as menthol and icilin, therefore plays a central role in the detection of environmental cold temperatures. TRPM8 is a voltage-dependent channel; its activation by cold or chemical ligands shifts its voltage thresholds towards physiological membrane potentials, leading to the opening of the channel. In addition to its critical role in temperature sensing, regulates basal tear secretion by sensing evaporation-induced cooling and changes in osmolality. The polypeptide is Transient receptor potential cation channel subfamily M member 8 (Trpm8) (Mus musculus (Mouse)).